The following is a 146-amino-acid chain: Cytochrome c oxidase subunit 5A, mitochondrial (146 aa).

Residues 1–37 constitute a mitochondrion transit peptide; it reads MLAAALRRCTAAAAARGLLHPVSAPSPAAAVCSIRCY. The SIFI-degron motif lies at 2 to 16; the sequence is LAAALRRCTAAAAAR. N6-acetyllysine is present on residues Lys83 and Lys109. Thr137 carries the phosphothreonine modification.

As to quaternary structure, component of the cytochrome c oxidase (complex IV, CIV), a multisubunit enzyme composed of 14 subunits. The complex is composed of a catalytic core of 3 subunits MT-CO1, MT-CO2 and MT-CO3, encoded in the mitochondrial DNA, and 11 supernumerary subunits COX4I, COX5A, COX5B, COX6A, COX6B, COX6C, COX7A, COX7B, COX7C, COX8 and NDUFA4, which are encoded in the nuclear genome. The complex exists as a monomer or a dimer and forms supercomplexes (SCs) in the inner mitochondrial membrane with NADH-ubiquinone oxidoreductase (complex I, CI) and ubiquinol-cytochrome c oxidoreductase (cytochrome b-c1 complex, complex III, CIII), resulting in different assemblies (supercomplex SCI(1)III(2)IV(1) and megacomplex MCI(2)III(2)IV(2)). Interacts with AFG1L. Interacts with RAB5IF. In terms of processing, in response to mitochondrial stress, the precursor protein is ubiquitinated by the SIFI complex in the cytoplasm before mitochondrial import, leading to its degradation. Within the SIFI complex, UBR4 initiates ubiquitin chain that are further elongated or branched by KCMF1. In terms of tissue distribution, expressed in the head of epididymal sperm but not in testicular sperm (at protein level).

The protein resides in the mitochondrion inner membrane. It participates in energy metabolism; oxidative phosphorylation. Functionally, component of the cytochrome c oxidase, the last enzyme in the mitochondrial electron transport chain which drives oxidative phosphorylation. The respiratory chain contains 3 multisubunit complexes succinate dehydrogenase (complex II, CII), ubiquinol-cytochrome c oxidoreductase (cytochrome b-c1 complex, complex III, CIII) and cytochrome c oxidase (complex IV, CIV), that cooperate to transfer electrons derived from NADH and succinate to molecular oxygen, creating an electrochemical gradient over the inner membrane that drives transmembrane transport and the ATP synthase. Cytochrome c oxidase is the component of the respiratory chain that catalyzes the reduction of oxygen to water. Electrons originating from reduced cytochrome c in the intermembrane space (IMS) are transferred via the dinuclear copper A center (CU(A)) of subunit 2 and heme A of subunit 1 to the active site in subunit 1, a binuclear center (BNC) formed by heme A3 and copper B (CU(B)). The BNC reduces molecular oxygen to 2 water molecules using 4 electrons from cytochrome c in the IMS and 4 protons from the mitochondrial matrix. This Rattus norvegicus (Rat) protein is Cytochrome c oxidase subunit 5A, mitochondrial (Cox5a).